The following is a 279-amino-acid chain: DegV domain-containing protein SP_1112 (279 aa).

The region spanning 4–277 is the DegV domain; it reads IKIVTDSSVT…ENAWAILIRY (274 aa). Threonine 62 and serine 94 together coordinate hexadecanoate.

May bind long-chain fatty acids, such as palmitate, and may play a role in lipid transport or fatty acid metabolism. The sequence is that of DegV domain-containing protein SP_1112 from Streptococcus pneumoniae serotype 4 (strain ATCC BAA-334 / TIGR4).